Reading from the N-terminus, the 488-residue chain is Ammonium transporter Rh type C-like 2 (488 aa).

Residues 1-21 are Cytoplasmic-facing; sequence MGNCFGSRGICDRPKNTNIRL. The helical transmembrane segment at 22-42 threads the bilayer; the sequence is SLPAVCFVWQVSMIILFGVFV. Over 43–73 the chain is Extracellular; that stretch reads RYNEEADTNWVYTKKEKNITSDIENDFYFRY. Residue asparagine 60 is glycosylated (N-linked (GlcNAc...) asparagine). Residues 74 to 94 traverse the membrane as a helical segment; the sequence is PSFQDVHVMIFVGFGFLMTFL. Over 95-98 the chain is Cytoplasmic; that stretch reads KRYS. A helical transmembrane segment spans residues 99–119; that stretch reads FGAVGFNFLIAAFGLQWALLM. Topologically, residues 120 to 139 are extracellular; it reads QGWFSPLGDDGKIKIGIENL. Residues 140-160 form a helical membrane-spanning segment; that stretch reads INADFCVASCLIAYGAVLGKV. Residues 161–162 are Cytoplasmic-facing; that stretch reads SP. The helical transmembrane segment at 163–183 threads the bilayer; that stretch reads VQLLVMTLFGITLYAVEEFII. Residues 184-191 are Extracellular-facing; it reads LRVLNAKD. The helical transmembrane segment at 192-214 threads the bilayer; sequence AGGSMVIHTFGAYYGLSISRVLY. Residues 215–232 lie on the Cytoplasmic side of the membrane; sequence RPNLNKSKHMNGSVYHSD. Residues 233–253 form a helical membrane-spanning segment; sequence VFAMIGTLFLWMFWPSFNSAI. The Extracellular portion of the chain corresponds to 254–264; it reads CNHGDGQHRAA. The helical transmembrane segment at 265 to 285 threads the bilayer; the sequence is INTYLALASTVLTTVAISSMF. The Cytoplasmic segment spans residues 286–298; sequence EKTGKLDMVHIQN. Residues 299–319 form a helical membrane-spanning segment; the sequence is STLAGGVAVGTAAEFMLMPYG. Position 320 (serine 320) is a topological domain, extracellular. The chain crosses the membrane as a helical span at residues 321 to 341; the sequence is LIVGFFCGIISTLGYIYLTPF. The Cytoplasmic portion of the chain corresponds to 342 to 356; it reads LEERLKIQDTCGIHN. A helical transmembrane segment spans residues 357–377; sequence LHAMPGVIGGIVGAISAAAAS. The Extracellular segment spans residues 378-409; it reads KEVYGDLGLKNIFSIEGSNVTRLPTVQGGYQA. The chain crosses the membrane as a helical span at residues 410–430; the sequence is AALCVALCFGIGGGTFVGLVL. At 431-488 the chain is on the cytoplasmic side; sequence KLPIWGDPADEHCFNDEMYWEVPEDEESIIPPVLSYNNHMIPNNKHEEMRETNFAEQS.

The protein belongs to the ammonium transporter (TC 2.A.49) family. Rh subfamily. As to quaternary structure, homotrimer. At larval stages, expressed only in the yolk sac and gill. However, the kidney and the gills are major sites of expression in adults.

The protein resides in the apical cell membrane. In terms of biological role, functions as an ammonia transporter. May play a role in the elimination of ammonia in the gill. In Danio rerio (Zebrafish), this protein is Ammonium transporter Rh type C-like 2 (rhcgl2).